A 547-amino-acid chain; its full sequence is ATP synthase subunit beta, mitochondrial (547 aa).

The N-terminal 45 residues, 1–45 (MASRRLLSSFLRSSTRRSLRPSFSNPRPSFLTSYCSSPASILRRY), are a transit peptide targeting the mitochondrion. A compositionally biased stretch (low complexity) spans 52–62 (KEPAASKPAGT). The disordered stretch occupies residues 52 to 74 (KEPAASKPAGTAGTGKGTITDEK). 226–233 (GGDWVGKT) contacts ATP.

It belongs to the ATPase alpha/beta chains family. F-type ATPases have 2 components, CF(1) - the catalytic core - and CF(0) - the membrane proton channel. CF(1) has five subunits: alpha(3), beta(3), gamma(1), delta(1), epsilon(1). CF(0) has three main subunits: a, b and c.

The protein localises to the mitochondrion. It is found in the mitochondrion inner membrane. The catalysed reaction is ATP + H2O + 4 H(+)(in) = ADP + phosphate + 5 H(+)(out). In terms of biological role, mitochondrial membrane ATP synthase (F(1)F(0) ATP synthase or Complex V) produces ATP from ADP in the presence of a proton gradient across the membrane which is generated by electron transport complexes of the respiratory chain. F-type ATPases consist of two structural domains, F(1) - containing the extramembraneous catalytic core, and F(0) - containing the membrane proton channel, linked together by a central stalk and a peripheral stalk. During catalysis, ATP synthesis in the catalytic domain of F(1) is coupled via a rotary mechanism of the central stalk subunits to proton translocation. Subunits alpha and beta form the catalytic core in F(1). Rotation of the central stalk against the surrounding alpha(3)beta(3) subunits leads to hydrolysis of ATP in three separate catalytic sites on the beta subunits. This chain is ATP synthase subunit beta, mitochondrial (ATPB), found in Daucus carota (Wild carrot).